The primary structure comprises 186 residues: Agglutinin isolectin 3 (186 aa).

A Pyrrolidone carboxylic acid modification is found at glutamine 1. Chitin-binding type-1 domains lie at 1 to 42 (QRCG…ACWT), 43 to 85 (SKRC…PCRA), 86 to 128 (DIKC…ACST), and 129 to 171 (DKPC…GCDG). Intrachain disulfides connect cysteine 3/cysteine 18, cysteine 12/cysteine 24, cysteine 17/cysteine 31, cysteine 35/cysteine 40, cysteine 46/cysteine 61, cysteine 55/cysteine 67, cysteine 60/cysteine 74, cysteine 78/cysteine 83, cysteine 89/cysteine 104, cysteine 98/cysteine 110, cysteine 103/cysteine 117, cysteine 121/cysteine 126, cysteine 132/cysteine 147, cysteine 141/cysteine 153, cysteine 146/cysteine 160, and cysteine 164/cysteine 169. 10–12 (MEC) contacts substrate. A substrate-binding site is contributed by 62–73 (SQYGHCGFGAEY). Substrate is bound at residue 114-115 (SE). The propeptide occupies 172 to 186 (VFAEAIATNSTLLAE). An N-linked (GlcNAc...) asparagine glycan is attached at asparagine 180.

Homodimer, u-shaped.

In terms of biological role, N-acetyl-D-glucosamine / N-acetyl-D-neuraminic acid binding lectin. This chain is Agglutinin isolectin 3, found in Triticum aestivum (Wheat).